The following is a 1776-amino-acid chain: Signal-induced proliferation-associated 1-like protein 3 (1776 aa).

2 disordered regions span residues 41–157 (AQNG…GRAF) and 240–325 (PGAL…EASR). Residues 54 to 69 (PAATTTRPSPTTPAMP) show a composition bias toward low complexity. 2 stretches are compositionally biased toward polar residues: residues 89-99 (EQSNPSPSQDT) and 112-129 (RNLQ…SSGS). Ser94 is modified (phosphoserine). Residues 131-140 (AFHRLSRRRS) are compositionally biased toward basic residues. Residue Ser140 is modified to Phosphoserine. The span at 257 to 268 (GQPTKDSLQSLQ) shows a compositional bias: polar residues. Position 394 is a phosphoserine (Ser394). The tract at residues 438-461 (SRASVGSPGGSSEAHMAEPTLSTH) is disordered. In terms of domain architecture, Rap-GAP spans 605-822 (LLKLDEQGLC…RTRQEYLKDL (218 aa)). One can recognise a PDZ domain in the interval 960-1024 (DMTLRRNGLG…DQMIDLLRTS (65 aa)). Disordered regions lie at residues 1040-1104 (PRRG…AQSL), 1117-1164 (RESQ…ATYA), and 1184-1632 (DPHF…LDPG). Composition is skewed to polar residues over residues 1074 to 1104 (APWQ…AQSL) and 1151 to 1160 (PSGSFSTPGS). Residues 1190–1201 (DGMSSGDSSSGG) are compositionally biased toward low complexity. The segment covering 1239 to 1255 (SRQDAAGKDSPNRHSKG) has biased composition (basic and acidic residues). Low complexity predominate over residues 1260–1275 (SSHSSSNTLSSNASSS). Over residues 1298-1316 (GGSSDSGIDTTLYTSSPSC) the composition is skewed to polar residues. A compositionally biased stretch (basic and acidic residues) spans 1344–1357 (SAGRPHPVDRRREV). Ser1358 carries the phosphoserine modification. The residue at position 1381 (Thr1381) is a Phosphothreonine. Residues 1409-1436 (VYKTASAETPRPSQLSQCSPFQLSTSVP) are compositionally biased toward polar residues. Lys1442 is subject to N6-acetyllysine. The segment covering 1503–1512 (TIEDDLKKLI) has biased composition (basic and acidic residues). Composition is skewed to polar residues over residues 1526–1541 (GQSP…SDES) and 1566–1578 (LFTS…SSTL). 2 positions are modified to phosphoserine: Ser1538 and Ser1541. Low complexity predominate over residues 1589 to 1601 (PPSGAPSTTPATG). Residues Ser1614 and Ser1617 each carry the phosphoserine modification. The span at 1620–1630 (DGRDRPLRRLD) shows a compositional bias: basic and acidic residues. A Phosphoserine modification is found at Ser1672. The tract at residues 1678–1705 (AHSPVHSHLSLERGPQTPRATPTMSEES) is disordered. Phosphothreonine is present on residues Thr1694 and Thr1698. A coiled-coil region spans residues 1715–1769 (QLEVMLKQLHTDLQKEKQDKVVLQSEVASLRQNNQRLQEESQAASEQLRKFAELF).

The protein localises to the apical cell membrane. Functionally, plays a critical role in epithelial cell morphogenesis, polarity, adhesion and cytoskeletal organization in the lens. The polypeptide is Signal-induced proliferation-associated 1-like protein 3 (Sipa1l3) (Mus musculus (Mouse)).